A 214-amino-acid polypeptide reads, in one-letter code: Soluble inorganic pyrophosphatase (214 aa).

Residues 1–20 (MSEEDKTAASAEQPKRAPKL) form a disordered region. Substrate contacts are provided by Lys64, Arg78, and Tyr90. Asp100, Asp105, and Asp137 together coordinate Mg(2+). Tyr174 is a binding site for substrate.

It belongs to the PPase family. It depends on Mg(2+) as a cofactor.

The protein localises to the cytoplasm. It catalyses the reaction diphosphate + H2O = 2 phosphate + H(+). This Zea mays (Maize) protein is Soluble inorganic pyrophosphatase (IPP).